Here is a 601-residue protein sequence, read N- to C-terminus: Jacalin-related lectin 3 (601 aa).

3 Jacalin-type lectin domains span residues 13 to 155 (PASL…HTQP), 240 to 382 (AKTY…HVME), and 438 to 583 (PSGP…HMQH).

The protein belongs to the jacalin lectin family.

In Arabidopsis thaliana (Mouse-ear cress), this protein is Jacalin-related lectin 3 (JAL3).